Consider the following 148-residue polypeptide: Small ribosomal subunit protein eS19 (148 aa).

Residues 79-90 (HGSTKNRGSRPA) show a composition bias toward basic residues. 2 disordered regions span residues 79–98 (HGST…ASGA) and 116–148 (DEEK…EDDE). Basic and acidic residues predominate over residues 130-140 (RDLDRIAKTTV).

It belongs to the eukaryotic ribosomal protein eS19 family.

In Emericella nidulans (strain FGSC A4 / ATCC 38163 / CBS 112.46 / NRRL 194 / M139) (Aspergillus nidulans), this protein is Small ribosomal subunit protein eS19 (rps19).